The primary structure comprises 797 residues: Kinesin-like protein KIF18B (797 aa).

Residues 11–352 (TVAVVVRVRP…LKYANRAKEI (342 aa)) enclose the Kinesin motor domain. 110–117 (GATGAGKT) contacts ATP. The stretch at 367-402 (ISKYATICEQLKTEVADLQAKLRAYEDAARDAGKQI) forms a coiled coil. Disordered stretches follow at residues 412 to 476 (EEAV…PNRL), 528 to 564 (AAVS…PSVP), 579 to 640 (LSSP…KEPQ), and 730 to 797 (KGSS…SGPR). A compositionally biased stretch (polar residues) spans 594 to 608 (MSNTSRLETPHSLNT). Over residues 731–744 (GSSIPKPSSISKGS) the composition is skewed to low complexity.

The protein belongs to the TRAFAC class myosin-kinesin ATPase superfamily. Kinesin family.

It is found in the nucleus. Its subcellular location is the cytoplasm. The protein resides in the cytoskeleton. In terms of biological role, may play an important role in microtubule plus-end depolymerizing activity in mitotic cells. The protein is Kinesin-like protein KIF18B (KIF18B) of Gallus gallus (Chicken).